Reading from the N-terminus, the 306-residue chain is D-alanine--D-alanine ligase B (306 aa).

In terms of domain architecture, ATP-grasp spans 101–303 (KLLWQGAGLP…FSQLVVRILE (203 aa)). 134 to 189 (ISALGLPVIVKPSREGSSVGMSKVVAENALQDALRLAFQHDEEVLIEKWLSGPEFT) is an ATP binding site. Mg(2+) contacts are provided by D257, E270, and N272.

This sequence belongs to the D-alanine--D-alanine ligase family. It depends on Mg(2+) as a cofactor. Mn(2+) is required as a cofactor.

The protein resides in the cytoplasm. It catalyses the reaction 2 D-alanine + ATP = D-alanyl-D-alanine + ADP + phosphate + H(+). It participates in cell wall biogenesis; peptidoglycan biosynthesis. Functionally, cell wall formation. This chain is D-alanine--D-alanine ligase B, found in Shigella flexneri.